We begin with the raw amino-acid sequence, 200 residues long: Probable nicotinate-nucleotide adenylyltransferase (200 aa).

This sequence belongs to the NadD family.

The enzyme catalyses nicotinate beta-D-ribonucleotide + ATP + H(+) = deamido-NAD(+) + diphosphate. The protein operates within cofactor biosynthesis; NAD(+) biosynthesis; deamido-NAD(+) from nicotinate D-ribonucleotide: step 1/1. Catalyzes the reversible adenylation of nicotinate mononucleotide (NaMN) to nicotinic acid adenine dinucleotide (NaAD). The polypeptide is Probable nicotinate-nucleotide adenylyltransferase (Leifsonia xyli subsp. xyli (strain CTCB07)).